Reading from the N-terminus, the 123-residue chain is uncharacterized protein (123 aa).

Residues 17-74 (FQKKKKTGSQTRRTLKPQPQQLQQNLPKGHETTGHTYERVLQQQGSQERSPGLMSEDS) form a disordered region. Thr-30 carries the post-translational modification Phosphothreonine. Over residues 32-43 (KPQPQQLQQNLP) the composition is skewed to low complexity. A compositionally biased stretch (basic and acidic residues) spans 44–54 (KGHETTGHTYE). Phosphoserine is present on Ser-62.

This is an uncharacterized protein from Homo sapiens (Human).